A 60-amino-acid polypeptide reads, in one-letter code: Large ribosomal subunit protein uL30 (60 aa).

The protein belongs to the universal ribosomal protein uL30 family. As to quaternary structure, part of the 50S ribosomal subunit.

The protein is Large ribosomal subunit protein uL30 of Dehalococcoides mccartyi (strain ATCC BAA-2100 / JCM 16839 / KCTC 5957 / BAV1).